We begin with the raw amino-acid sequence, 89 residues long: Small ribosomal subunit protein uS14A (89 aa).

This sequence belongs to the universal ribosomal protein uS14 family. In terms of assembly, part of the 30S ribosomal subunit. Contacts proteins S3 and S10.

Its function is as follows. Binds 16S rRNA, required for the assembly of 30S particles and may also be responsible for determining the conformation of the 16S rRNA at the A site. This Listeria innocua serovar 6a (strain ATCC BAA-680 / CLIP 11262) protein is Small ribosomal subunit protein uS14A.